The chain runs to 424 residues: D-inositol 3-phosphate glycosyltransferase (424 aa).

Histidine 16 is a 1D-myo-inositol 3-phosphate binding site. UDP-N-acetyl-alpha-D-glucosamine is bound by residues 22 to 23 and glycine 30; that span reads QP. 1D-myo-inositol 3-phosphate is bound by residues 27–32, lysine 85, tyrosine 118, threonine 142, and arginine 162; that span reads DAGGMN. Residues arginine 240 and lysine 245 each coordinate UDP-N-acetyl-alpha-D-glucosamine. Mg(2+)-binding residues include methionine 313, arginine 314, and alanine 316. UDP-N-acetyl-alpha-D-glucosamine-binding residues include glutamate 326 and glutamate 334. Position 340 (threonine 340) interacts with Mg(2+).

The protein belongs to the glycosyltransferase group 1 family. MshA subfamily. As to quaternary structure, homodimer.

It catalyses the reaction 1D-myo-inositol 3-phosphate + UDP-N-acetyl-alpha-D-glucosamine = 1D-myo-inositol 2-acetamido-2-deoxy-alpha-D-glucopyranoside 3-phosphate + UDP + H(+). In terms of biological role, catalyzes the transfer of a N-acetyl-glucosamine moiety to 1D-myo-inositol 3-phosphate to produce 1D-myo-inositol 2-acetamido-2-deoxy-glucopyranoside 3-phosphate in the mycothiol biosynthesis pathway. The chain is D-inositol 3-phosphate glycosyltransferase from Jonesia denitrificans (strain ATCC 14870 / DSM 20603 / BCRC 15368 / CIP 55.134 / JCM 11481 / NBRC 15587 / NCTC 10816 / Prevot 55134) (Listeria denitrificans).